The sequence spans 116 residues: Small ribosomal subunit protein bS16 (116 aa).

This sequence belongs to the bacterial ribosomal protein bS16 family.

The protein is Small ribosomal subunit protein bS16 of Chlamydia trachomatis serovar L2 (strain ATCC VR-902B / DSM 19102 / 434/Bu).